The sequence spans 194 residues: uncharacterized protein (194 aa).

Positions 34-192 (VMQCLLGGNK…CELVDQTLFP (159 aa)) constitute an SIS domain.

The protein belongs to the SIS family. DiaA subfamily.

This is an uncharacterized protein from Haemophilus influenzae (strain ATCC 51907 / DSM 11121 / KW20 / Rd).